Here is a 115-residue protein sequence, read N- to C-terminus: Replication initiation control protein YabA (115 aa).

Residues histidine 86, cysteine 88, cysteine 102, and cysteine 105 each coordinate Zn(2+).

Belongs to the YabA family. In terms of assembly, homotetramer. Interacts with both DnaA and DnaN, acting as a bridge between these two proteins. The cofactor is Zn(2+).

The protein localises to the cytoplasm. It is found in the nucleoid. Functionally, involved in control of chromosome replication initiation. Inhibits the cooperative binding of DnaA to the oriC region, thus negatively regulating initiation of chromosome replication. Inhibits the ability of DnaA-ATP to form a helix on DNA; does not disassemble preformed DnaA-DNA helices. Decreases the residence time of DnaA on the chromosome at its binding sites (oriC, replication forks and promoter-binding sites). Tethers DnaA to the replication machinery via the DNA polymerase beta sliding clamp subunit (dnaN). Associates with oriC and other DnaA targets on the chromosome in a DnaA-dependent manner. In Enterococcus faecalis (strain ATCC 700802 / V583), this protein is Replication initiation control protein YabA.